The sequence spans 107 residues: MAYVIAEPCVATCDTACVPVCPVDCIHGPLAADEISRIPEGERKTRLAGLQLYIDPESCICCGACENECPVGAIFDEDELPAEWQRYREINARFFDDRAKERAPEET.

4Fe-4S ferredoxin-type domains follow at residues methionine 1–alanine 31 and leucine 50–glutamate 79. [4Fe-4S] cluster is bound by residues cysteine 9, cysteine 13, cysteine 17, cysteine 21, cysteine 59, cysteine 62, cysteine 65, and cysteine 69.

The cofactor is [4Fe-4S] cluster.

Ferredoxins are iron-sulfur proteins that transfer electrons in a wide variety of metabolic reactions. Fdx2 can receive electrons from both FdR_A and FdR_B ferredoxin reductases, with a preference for FdR_B compared with FdR_A, and transfer the electrons to the cytochrome P450 CYP260A1. The chain is Ferredoxin Fdx8 from Sorangium cellulosum (strain So ce56) (Polyangium cellulosum (strain So ce56)).